A 132-amino-acid chain; its full sequence is Small ribosomal subunit protein uS8 (132 aa).

It belongs to the universal ribosomal protein uS8 family. Part of the 30S ribosomal subunit. Contacts proteins S5 and S12.

One of the primary rRNA binding proteins, it binds directly to 16S rRNA central domain where it helps coordinate assembly of the platform of the 30S subunit. The chain is Small ribosomal subunit protein uS8 from Lactobacillus johnsonii (strain CNCM I-12250 / La1 / NCC 533).